A 100-amino-acid polypeptide reads, in one-letter code: uncharacterized protein (100 aa).

Belongs to the mulikevirus gp14 protein family.

Its subcellular location is the host cytoplasm. This is an uncharacterized protein from Enterobacteriaceae (Bacteriophage Mu).